The chain runs to 444 residues: Phosphoglucosamine mutase (444 aa).

S103 acts as the Phosphoserine intermediate in catalysis. S103, D241, D243, and D245 together coordinate Mg(2+). The residue at position 103 (S103) is a Phosphoserine.

It belongs to the phosphohexose mutase family. The cofactor is Mg(2+). Post-translationally, activated by phosphorylation.

It catalyses the reaction alpha-D-glucosamine 1-phosphate = D-glucosamine 6-phosphate. Catalyzes the conversion of glucosamine-6-phosphate to glucosamine-1-phosphate. The chain is Phosphoglucosamine mutase from Deinococcus geothermalis (strain DSM 11300 / CIP 105573 / AG-3a).